The primary structure comprises 125 residues: Small ribosomal subunit protein bS6 (125 aa).

This sequence belongs to the bacterial ribosomal protein bS6 family.

Its function is as follows. Binds together with bS18 to 16S ribosomal RNA. The sequence is that of Small ribosomal subunit protein bS6 (rpsF) from Campylobacter jejuni subsp. jejuni serotype O:2 (strain ATCC 700819 / NCTC 11168).